Reading from the N-terminus, the 216-residue chain is Peptide deformylase 1 (216 aa).

Fe cation contacts are provided by Cys-135 and His-177. Glu-178 is an active-site residue. Fe cation is bound at residue His-181.

This sequence belongs to the polypeptide deformylase family. It depends on Fe(2+) as a cofactor.

The enzyme catalyses N-terminal N-formyl-L-methionyl-[peptide] + H2O = N-terminal L-methionyl-[peptide] + formate. In terms of biological role, removes the formyl group from the N-terminal Met of newly synthesized proteins. Requires at least a dipeptide for an efficient rate of reaction. N-terminal L-methionine is a prerequisite for activity but the enzyme has broad specificity at other positions. This Streptomyces avermitilis (strain ATCC 31267 / DSM 46492 / JCM 5070 / NBRC 14893 / NCIMB 12804 / NRRL 8165 / MA-4680) protein is Peptide deformylase 1.